A 171-amino-acid chain; its full sequence is PRA1-like protein (171 aa).

3 consecutive transmembrane segments (helical) span residues 67-87 (AIIA…LIVI), 119-139 (VILA…ETII), and 140-160 (WLVG…EPPV).

This sequence belongs to the PRA1 family.

The protein localises to the membrane. The protein is PRA1-like protein of Schizosaccharomyces pombe (strain 972 / ATCC 24843) (Fission yeast).